The chain runs to 141 residues: Chorion protein S16 (141 aa).

An N-terminal signal peptide occupies residues 1–22; it reads MSANNMRLLCLLLACYISAIVA.

It belongs to the chorion protein S16 family.

It localises to the secreted. Chorion membrane (egg shell) protein; plays a role in protecting the egg from the environment. In Drosophila subobscura (Fruit fly), this protein is Chorion protein S16 (Cp16).